Consider the following 182-residue polypeptide: Transcriptional repressor NrdR (182 aa).

The disordered stretch occupies residues 1-24 (MRCPYCGGLDTQVRDSRPTEDNTA). A zinc finger lies at 3–34 (CPYCGGLDTQVRDSRPTEDNTAIRRRRICPDC). The segment covering 12–24 (QVRDSRPTEDNTA) has biased composition (basic and acidic residues). Positions 49 to 139 (LMVLKRSGRR…VYRNFREAKD (91 aa)) constitute an ATP-cone domain. The segment at 146–182 (ELSQPELAQSDDVKAEGGAEGGRDKPKAAGKPPRSAE) is disordered. Over residues 156–172 (DDVKAEGGAEGGRDKPK) the composition is skewed to basic and acidic residues.

This sequence belongs to the NrdR family. Zn(2+) serves as cofactor.

In terms of biological role, negatively regulates transcription of bacterial ribonucleotide reductase nrd genes and operons by binding to NrdR-boxes. The chain is Transcriptional repressor NrdR from Xanthobacter autotrophicus (strain ATCC BAA-1158 / Py2).